We begin with the raw amino-acid sequence, 111 residues long: HTH-type transcriptional regulator SinR (111 aa).

The region spanning isoleucine 6–leucine 61 is the HTH cro/C1-type domain. The segment at residues leucine 17–arginine 36 is a DNA-binding region (H-T-H motif). Residues lysine 65–lysine 103 form the Sin domain.

In terms of assembly, homotetramer. Also associates with SinI.

Affects autolysin level and flagellation. In Bacillus licheniformis, this protein is HTH-type transcriptional regulator SinR (sinR).